The chain runs to 200 residues: GTP cyclohydrolase-2 (200 aa).

R49–E53 lines the GTP pocket. The Zn(2+) site is built by C54, C65, and C67. Residues Q70, E92–R94, and T114 each bind GTP. D126 acts as the Proton acceptor in catalysis. Catalysis depends on R128, which acts as the Nucleophile. Residues T149 and K154 each coordinate GTP.

The protein belongs to the GTP cyclohydrolase II family. As to quaternary structure, homodimer. The cofactor is Zn(2+).

It catalyses the reaction GTP + 4 H2O = 2,5-diamino-6-hydroxy-4-(5-phosphoribosylamino)-pyrimidine + formate + 2 phosphate + 3 H(+). The protein operates within cofactor biosynthesis; riboflavin biosynthesis; 5-amino-6-(D-ribitylamino)uracil from GTP: step 1/4. Functionally, catalyzes the conversion of GTP to 2,5-diamino-6-ribosylamino-4(3H)-pyrimidinone 5'-phosphate (DARP), formate and pyrophosphate. The polypeptide is GTP cyclohydrolase-2 (Klebsiella pneumoniae subsp. pneumoniae (strain ATCC 700721 / MGH 78578)).